A 516-amino-acid polypeptide reads, in one-letter code: GMP synthase [glutamine-hydrolyzing] (516 aa).

In terms of domain architecture, Glutamine amidotransferase type-1 spans 8-198 (KILILDFGSQ…VVNICGCDTL (191 aa)). The Nucleophile role is filled by Cys84. Residues His172 and Glu174 contribute to the active site. Residues 199-391 (WNIENIIEND…LGLPYNMLYR (193 aa)) enclose the GMPS ATP-PPase domain. 226–232 (SGGVDSS) provides a ligand contact to ATP.

In terms of assembly, homodimer.

It carries out the reaction XMP + L-glutamine + ATP + H2O = GMP + L-glutamate + AMP + diphosphate + 2 H(+). It participates in purine metabolism; GMP biosynthesis; GMP from XMP (L-Gln route): step 1/1. Functionally, catalyzes the synthesis of GMP from XMP. The polypeptide is GMP synthase [glutamine-hydrolyzing] (Francisella tularensis subsp. mediasiatica (strain FSC147)).